The sequence spans 96 residues: Co-chaperonin GroES (96 aa).

The protein belongs to the GroES chaperonin family. As to quaternary structure, heptamer of 7 subunits arranged in a ring. Interacts with the chaperonin GroEL.

Its subcellular location is the cytoplasm. Functionally, together with the chaperonin GroEL, plays an essential role in assisting protein folding. The GroEL-GroES system forms a nano-cage that allows encapsulation of the non-native substrate proteins and provides a physical environment optimized to promote and accelerate protein folding. GroES binds to the apical surface of the GroEL ring, thereby capping the opening of the GroEL channel. This chain is Co-chaperonin GroES, found in Photobacterium profundum (strain SS9).